The sequence spans 344 residues: MPFLWGLRQDKEACVGTNNQSYICDTGHCCGQAQCCSHYYELWWFWLVWTIIIILSCCCVCHHRRAKHRLQAQQRQHEINLIAYREAHNYSALPFYFRFLPNYLLPPYEEVVNRPPTPPPPYSAFQLQQQQLLPPQGGPAGGSPPGADQPQGSQGAQSSPLSGPSRSSTRPPSVADPQSLEVPTERAATKALGMESSSSVASHGELDPGAFLDRDSECKEELLKDSSSEHGGAPPDSKDKTPGRHRRFTGDSGIEVCVCNRGHHDDDLKEFNTLIDDALDGPLDFCDSCHVRPPVDEEEGLCLSSEGQAREHGHPHLPRPPACLLLNTINEQDSPNSQRSSSPS.

A helical membrane pass occupies residues 42–62 (LWWFWLVWTIIIILSCCCVCH). Disordered stretches follow at residues 132-250 (LLPP…RFTG) and 302-321 (CLSS…PRPP). Over residues 145-173 (PGADQPQGSQGAQSSPLSGPSRSSTRPPS) the composition is skewed to low complexity. The residue at position 173 (serine 173) is a Phosphoserine. Basic and acidic residues predominate over residues 212–228 (LDRDSECKEELLKDSSS).

It localises to the membrane. The protein is WW domain binding protein 1-like (Wbp1l) of Rattus norvegicus (Rat).